The sequence spans 443 residues: Trigger factor (443 aa).

The PPIase FKBP-type domain maps to 165–250 (GDQVVMDFVG…IKEVKEPVAA (86 aa)).

The protein belongs to the FKBP-type PPIase family. Tig subfamily.

Its subcellular location is the cytoplasm. The enzyme catalyses [protein]-peptidylproline (omega=180) = [protein]-peptidylproline (omega=0). Involved in protein export. Acts as a chaperone by maintaining the newly synthesized protein in an open conformation. Functions as a peptidyl-prolyl cis-trans isomerase. In Ruegeria pomeroyi (strain ATCC 700808 / DSM 15171 / DSS-3) (Silicibacter pomeroyi), this protein is Trigger factor.